We begin with the raw amino-acid sequence, 286 residues long: Shikimate dehydrogenase (NADP(+)) (286 aa).

Shikimate contacts are provided by residues 19 to 21 (SVS) and threonine 66. Lysine 70 acts as the Proton acceptor in catalysis. Asparagine 91 and aspartate 106 together coordinate shikimate. Residues 130-134 (GAGGS) and alanine 225 each bind NADP(+). Shikimate is bound at residue tyrosine 227. Glycine 248 contributes to the NADP(+) binding site.

This sequence belongs to the shikimate dehydrogenase family. In terms of assembly, homodimer.

It catalyses the reaction shikimate + NADP(+) = 3-dehydroshikimate + NADPH + H(+). Its pathway is metabolic intermediate biosynthesis; chorismate biosynthesis; chorismate from D-erythrose 4-phosphate and phosphoenolpyruvate: step 4/7. Functionally, involved in the biosynthesis of the chorismate, which leads to the biosynthesis of aromatic amino acids. Catalyzes the reversible NADPH linked reduction of 3-dehydroshikimate (DHSA) to yield shikimate (SA). The chain is Shikimate dehydrogenase (NADP(+)) from Dehalococcoides mccartyi (strain ATCC BAA-2266 / KCTC 15142 / 195) (Dehalococcoides ethenogenes (strain 195)).